The sequence spans 94 residues: PqqA binding protein (94 aa).

This sequence belongs to the PqqD family. As to quaternary structure, monomer. Interacts with PqqE.

It functions in the pathway cofactor biosynthesis; pyrroloquinoline quinone biosynthesis. Its function is as follows. Functions as a PqqA binding protein and presents PqqA to PqqE, in the pyrroloquinoline quinone (PQQ) biosynthetic pathway. In Acinetobacter baumannii (strain SDF), this protein is PqqA binding protein.